Here is an 84-residue protein sequence, read N- to C-terminus: Small ribosomal subunit protein uS17 (84 aa).

Belongs to the universal ribosomal protein uS17 family. In terms of assembly, part of the 30S ribosomal subunit.

In terms of biological role, one of the primary rRNA binding proteins, it binds specifically to the 5'-end of 16S ribosomal RNA. This Sodalis glossinidius (strain morsitans) protein is Small ribosomal subunit protein uS17.